The following is a 286-amino-acid chain: Transcription factor bHLH137 (286 aa).

Polar residues predominate over residues serine 63 to glutamine 84. Positions serine 63 to leucine 149 are disordered. The bHLH domain occupies glutamine 142–leucine 192.

In terms of assembly, homodimer.

Its subcellular location is the nucleus. This Arabidopsis thaliana (Mouse-ear cress) protein is Transcription factor bHLH137 (BHLH137).